The following is a 277-amino-acid chain: Cation-dependent mannose-6-phosphate receptor (277 aa).

Residues 1–26 (MFPFYSCWRTGLLLLLLAVAVRESWQ) form the signal peptide. The Lumenal segment spans residues 27 to 185 (TEEKTCDLVG…SLACSPEISH (159 aa)). The region spanning 30–181 (KTCDLVGEKG…EMDSSLACSP (152 aa)) is the MRH domain. Residues C32 and C78 are joined by a disulfide bond. N-linked (GlcNAc...) asparagine glycosylation is found at N57, N83, N94, N107, and N113. Intrachain disulfides connect C132–C167 and C145–C179. Residues 186-210 (LSVGSILLVTFASLVAVYVVGGFLY) form a helical membrane-spanning segment. Over 211 to 277 (QRLVVGAKGM…EERDDHLLPM (67 aa)) the chain is Cytoplasmic. Residues 256–277 (RGVGDDQLGEESEERDDHLLPM) form a disordered region. Phosphoserine is present on S267.

Homodimer. Binds GGA1, GGA2 and GGA3.

It is found in the lysosome membrane. Transport of phosphorylated lysosomal enzymes from the Golgi complex and the cell surface to lysosomes. Lysosomal enzymes bearing phosphomannosyl residues bind specifically to mannose-6-phosphate receptors in the Golgi apparatus and the resulting receptor-ligand complex is transported to an acidic prelyosomal compartment where the low pH mediates the dissociation of the complex. This Homo sapiens (Human) protein is Cation-dependent mannose-6-phosphate receptor (M6PR).